A 245-amino-acid chain; its full sequence is 1-(5-phosphoribosyl)-5-[(5-phosphoribosylamino)methylideneamino] imidazole-4-carboxamide isomerase (245 aa).

Asp8 functions as the Proton acceptor in the catalytic mechanism. Residue Asp131 is the Proton donor of the active site.

It belongs to the HisA/HisF family.

It localises to the cytoplasm. It catalyses the reaction 1-(5-phospho-beta-D-ribosyl)-5-[(5-phospho-beta-D-ribosylamino)methylideneamino]imidazole-4-carboxamide = 5-[(5-phospho-1-deoxy-D-ribulos-1-ylimino)methylamino]-1-(5-phospho-beta-D-ribosyl)imidazole-4-carboxamide. It functions in the pathway amino-acid biosynthesis; L-histidine biosynthesis; L-histidine from 5-phospho-alpha-D-ribose 1-diphosphate: step 4/9. This Neisseria gonorrhoeae (strain NCCP11945) protein is 1-(5-phosphoribosyl)-5-[(5-phosphoribosylamino)methylideneamino] imidazole-4-carboxamide isomerase.